The sequence spans 614 residues: Deoxynucleoside triphosphate triphosphohydrolase SAMHD1 (614 aa).

Over residues 1–13 (MGSPAAGWGAAPA) the composition is skewed to low complexity. Residues 1 to 33 (MGSPAAGWGAAPAKRARREGSAESSCGSPADRD) are disordered. The SAM domain maps to 37 to 102 (WDTERLCQHL…LACLNQLRQT (66 aa)). Positions 107 and 108 each coordinate GTP. Residue N110 participates in dGTP binding. D128, Q133, and R136 together coordinate GTP. The dGTP site is built by Q140, L141, V147, and R155. Residue Q140 coordinates dATP. Q140 is a binding site for dCTP. Q140 contacts dTTP. R155 provides a ligand contact to dATP. R155 serves as a coordination point for dCTP. R155 is a binding site for dTTP. The 153-residue stretch at 155–307 (RFEHSLGVGY…GIDVDKWDYF (153 aa)) folds into the HD domain. The Mn(2+) site is built by H158, H197, and D198. DATP is bound by residues H201 and H206. DCTP-binding residues include H201 and H206. Residues H201 and H206 each contribute to the dTTP site. H224 is an active-site residue. D302 serves as a coordination point for Mn(2+). The dGTP site is built by K303, Y306, D310, R324, R343, K345, N349, R357, Y365, Q366, H367, and K368. Residues K303, Y306, and D310 each contribute to the dATP site. K303, Y306, and D310 together coordinate dCTP. Positions 303, 306, and 310 each coordinate dTTP. Position 357 (R357) interacts with dATP. Residue R357 participates in dCTP binding. Q366 is a dATP binding site. Q366 is a binding site for dCTP. A dTTP-binding site is contributed by Q366. The GTP site is built by R442, K446, and K515. K515 is a dGTP binding site.

This sequence belongs to the SAMHD1 family. In terms of assembly, homodimer; in absence of GTP and dNTP. Homotetramer; in GTP- and dNTP-bound form. Interacts with rbbp8/CtIP. It depends on Zn(2+) as a cofactor.

It is found in the nucleus. The protein localises to the chromosome. It carries out the reaction a 2'-deoxyribonucleoside 5'-triphosphate + H2O = a 2'-deoxyribonucleoside + triphosphate + H(+). It catalyses the reaction dATP + H2O = 2'-deoxyadenosine + triphosphate + H(+). The enzyme catalyses dCTP + H2O = 2'-deoxycytidine + triphosphate + H(+). The catalysed reaction is dGTP + H2O = 2'-deoxyguanosine + triphosphate + H(+). It carries out the reaction dTTP + H2O = thymidine + triphosphate + H(+). With respect to regulation, allosterically activated and regulated via the combined actions of GTP and dNTPs (dATP, dGTP, dTTP and dCTP): Allosteric site 1 binds GTP, while allosteric site 2 binds dNTP. Allosteric activation promotes the formation of highly active homotetramers. Its function is as follows. Protein that acts both as a host restriction factor involved in defense response to virus and as a regulator of DNA end resection at stalled replication forks. Has deoxynucleoside triphosphate (dNTPase) activity, which is required to restrict infection by viruses: dNTPase activity reduces cellular dNTP levels to levels too low for retroviral reverse transcription to occur, blocking early-stage virus replication in dendritic and other myeloid cells. Functions during S phase at stalled DNA replication forks to promote the resection of gapped or reversed forks: acts by stimulating the exonuclease activity of MRE11, activating the ATR-CHK1 pathway and allowing the forks to restart replication. Its ability to promote degradation of nascent DNA at stalled replication forks is required to prevent induction of type I interferons, thereby preventing chronic inflammation. Ability to promote DNA end resection at stalled replication forks is independent of dNTPase activity. The polypeptide is Deoxynucleoside triphosphate triphosphohydrolase SAMHD1 (Gallus gallus (Chicken)).